Reading from the N-terminus, the 346-residue chain is Dimethyladenosine transferase 1, mitochondrial (346 aa).

The N-terminal 27 residues, 1 to 27 (MATQGVLAKYRLPPLPTIGEIIKLFNL), are a transit peptide targeting the mitochondrion. Residues asparagine 36, leucine 38, glycine 63, glutamate 85, lysine 86, aspartate 111, isoleucine 112, and asparagine 141 each coordinate S-adenosyl-L-methionine.

The protein belongs to the class I-like SAM-binding methyltransferase superfamily. rRNA adenine N(6)-methyltransferase family. KsgA subfamily.

The protein localises to the mitochondrion. The catalysed reaction is adenosine(N)/adenosine(N+1) in rRNA + 4 S-adenosyl-L-methionine = N(6)-dimethyladenosine(N)/N(6)-dimethyladenosine(N+1) in rRNA + 4 S-adenosyl-L-homocysteine + 4 H(+). Its function is as follows. Mitochondrial methyltransferase which uses S-adenosyl methionine to dimethylate two highly conserved adjacent adenosine residues (A1583 and A1584) within the loop of helix 45 at the 3-prime end of 12S rRNA, thereby regulating the assembly or stability of the small subunit of the mitochondrial ribosome. Also required for basal transcription of mitochondrial DNA, probably via its interaction with POLRMT and TFAM. Stimulates transcription independently of the methyltransferase activity. This Xenopus tropicalis (Western clawed frog) protein is Dimethyladenosine transferase 1, mitochondrial (tfb1m).